Consider the following 464-residue polypeptide: Arginine biosynthesis bifunctional protein ArgJ, mitochondrial (464 aa).

The transit peptide at 1-22 (MAASFKALPQQLTLTRSFARCY) directs the protein to the mitochondrion. Thr-193, Lys-222, Thr-233, Glu-320, Asn-459, and Thr-464 together coordinate substrate. The active-site Nucleophile is the Thr-233.

This sequence belongs to the ArgJ family. As to quaternary structure, heterodimer of an alpha and a beta chain. Post-translationally, the alpha and beta chains are autoproteolytically processed from a single precursor protein within the mitochondrion.

The protein localises to the mitochondrion matrix. It catalyses the reaction N(2)-acetyl-L-ornithine + L-glutamate = N-acetyl-L-glutamate + L-ornithine. The enzyme catalyses L-glutamate + acetyl-CoA = N-acetyl-L-glutamate + CoA + H(+). It functions in the pathway amino-acid biosynthesis; L-arginine biosynthesis; L-ornithine and N-acetyl-L-glutamate from L-glutamate and N(2)-acetyl-L-ornithine (cyclic): step 1/1. It participates in amino-acid biosynthesis; L-arginine biosynthesis; N(2)-acetyl-L-ornithine from L-glutamate: step 1/4. In terms of biological role, catalyzes two activities which are involved in the cyclic version of arginine biosynthesis: the synthesis of acetylglutamate from glutamate and acetyl-CoA, and of ornithine by transacetylation between acetylornithine and glutamate. In Verticillium alfalfae (strain VaMs.102 / ATCC MYA-4576 / FGSC 10136) (Verticillium wilt of alfalfa), this protein is Arginine biosynthesis bifunctional protein ArgJ, mitochondrial.